The sequence spans 341 residues: tRNA N6-adenosine threonylcarbamoyltransferase (341 aa).

Fe cation is bound by residues histidine 114 and histidine 118. Substrate contacts are provided by residues leucine 136 to glycine 140, aspartate 170, glycine 183, aspartate 187, and asparagine 275. Aspartate 303 lines the Fe cation pocket.

It belongs to the KAE1 / TsaD family. It depends on Fe(2+) as a cofactor.

Its subcellular location is the cytoplasm. It carries out the reaction L-threonylcarbamoyladenylate + adenosine(37) in tRNA = N(6)-L-threonylcarbamoyladenosine(37) in tRNA + AMP + H(+). Its function is as follows. Required for the formation of a threonylcarbamoyl group on adenosine at position 37 (t(6)A37) in tRNAs that read codons beginning with adenine. Is involved in the transfer of the threonylcarbamoyl moiety of threonylcarbamoyl-AMP (TC-AMP) to the N6 group of A37, together with TsaE and TsaB. TsaD likely plays a direct catalytic role in this reaction. This Mycobacterium avium (strain 104) protein is tRNA N6-adenosine threonylcarbamoyltransferase.